The primary structure comprises 191 residues: Shikimate kinase (191 aa).

Residue 24–29 coordinates ATP; the sequence is GSGKTS. A Mg(2+)-binding site is contributed by Thr28. Positions 46, 70, and 92 each coordinate substrate. Position 130 (Arg130) interacts with ATP. Arg149 lines the substrate pocket.

The protein belongs to the shikimate kinase family. As to quaternary structure, monomer. The cofactor is Mg(2+).

It localises to the cytoplasm. The catalysed reaction is shikimate + ATP = 3-phosphoshikimate + ADP + H(+). It participates in metabolic intermediate biosynthesis; chorismate biosynthesis; chorismate from D-erythrose 4-phosphate and phosphoenolpyruvate: step 5/7. Catalyzes the specific phosphorylation of the 3-hydroxyl group of shikimic acid using ATP as a cosubstrate. This is Shikimate kinase from Parasynechococcus marenigrum (strain WH8102).